Here is a 79-residue protein sequence, read N- to C-terminus: Cyclin-dependent kinases regulatory subunit 2 (79 aa).

The protein belongs to the CKS family. In terms of assembly, forms a homohexamer that can probably bind six kinase subunits.

Binds to the catalytic subunit of the cyclin dependent kinases and is essential for their biological function. The sequence is that of Cyclin-dependent kinases regulatory subunit 2 (cks2) from Xenopus laevis (African clawed frog).